A 932-amino-acid chain; its full sequence is Progesterone receptor (932 aa).

Positions 1–164 (MTELKAKGPR…PATQGVLSPL (164 aa)) are AF3; mediates transcriptional activation. Residues 1–254 (MTELKAKGPR…GGAAAGGAAA (254 aa)) form a disordered region. Residues 1 to 565 (MTELKAKGPR…YSFESLPQKI (565 aa)) are modulating, Pro-Rich. A Phosphoserine modification is found at S20. Positions 55-59 (LDGLL) match the LXXL motif 1 motif. Position 81 is a phosphoserine (S81). The span at 88–103 (SRAEATRGAGGSSSSP) shows a compositional bias: low complexity. The LXXL motif 2 motif lies at 115–119 (LDTLL). Phosphoserine is present on residues S130 and S162. Residues 165-304 (MSRSGGKAGD…LATTVMDFIH (140 aa)) are mediates transcriptional transrepression. The Nuclear localization signal motif lies at 183–187 (KVLPQ). Phosphoserine occurs at positions 190 and 213. Residues 220–231 (EVEEEDGSESED) are compositionally biased toward acidic residues. Positions 232–254 (SAGPLLKGKPRALGGAAAGGAAA) are enriched in low complexity. S293 is subject to Phosphoserine; by MAPK1. Positions 334-349 (AASAFAPPRSSPSASS) are enriched in low complexity. The tract at residues 334–356 (AASAFAPPRSSPSASSTPVAVGD) is disordered. Phosphoserine; by MAPK is present on S344. Residue K387 forms a Glycyl lysine isopeptide (Lys-Gly) (interchain with G-Cter in SUMO); alternate linkage. Residue K387 forms a Glycyl lysine isopeptide (Lys-Gly) (interchain with G-Cter in ubiquitin); alternate linkage. 2 disordered regions span residues 414-451 (PDFP…SSAS) and 468-499 (PPQQ…STAA). Positions 417 to 432 (PLGPPPPLPPRAPPSR) are enriched in pro residues. Residues 433–451 (PGEAAVTAAPASASVSSAS) are compositionally biased toward low complexity. An AF1; mediates transcriptional activation region spans residues 455–545 (STLECILYKA…VYPPYLNYLR (91 aa)). Over residues 470–480 (QQGPFAPPPSK) the composition is skewed to pro residues. K530 participates in a covalent cross-link: Glycyl lysine isopeptide (Lys-Gly) (interchain with G-Cter in SUMO). NR C4-type zinc fingers lie at residues 566 to 586 (CLIC…CGSC) and 602 to 626 (CAGR…LRKC). Positions 566–638 (CLICGDEASG…AGMVLGGRKF (73 aa)) form a DNA-binding region, nuclear receptor. S675 carries the post-translational modification Phosphoserine. The NR LBD domain maps to 678–912 (QDIQLIPPLI…EFPEMMSEVI (235 aa)). Residues 686 to 932 (LINLLMSIEP…MVKPLLFHKK (247 aa)) form an AF2; mediates transcriptional activation region. R765 serves as a coordination point for progesterone.

The protein belongs to the nuclear hormone receptor family. In terms of assembly, interacts with SMARD1 and UNC45A. Interacts with CUEDC2; the interaction promotes ubiquitination, decreases sumoylation, and represses transcriptional activity. Interacts with PIAS3; the interaction promotes sumoylation of PR in a hormone-dependent manner, inhibits DNA-binding, and alters nuclear export. Interacts with SP1; the interaction requires ligand-induced phosphorylation on Ser-344 by ERK1/2-MAPK. Interacts with PRMT2. Interacts with NCOA2 and NCOA1. Interacts with KLF9. Interacts with GTF2B. In terms of processing, phosphorylated on multiple serine sites. Several of these sites are hormone-dependent. Phosphorylation on Ser-293 is highly hormone-dependent and modulates ubiquitination and sumoylation on Lys-387. Phosphorylation on Ser-102 and Ser-344 also requires induction by hormone. Basal phosphorylation on Ser-81, Ser-162 and Ser-190 is increased in response to progesterone and can be phosphorylated in vitro by the CDK2-A1 complex. Phosphorylation at Ser-162 and Ser-293, but not at Ser-190, is impaired during the G(2)/M phase of the cell cycle. Phosphorylation on Ser-344 by ERK1/2 MAPK is required for interaction with SP1. Post-translationally, sumoylation is hormone-dependent and represses transcriptional activity. Sumoylation on all three sites is enhanced by PIAS3. Desumoylated by SENP1. Sumoylation on Lys-387, the main site of sumoylation, is repressed by ubiquitination on the same site, and modulated by phosphorylation at Ser-293. Ubiquitination is hormone-dependent and represses sumoylation on the same site. Promoted by MAPK-mediated phosphorylation on Ser-293. Ubiquitinated by UBR5, leading to its degradation: UBR5 specifically recognizes and binds ligand-bound PGR when it is not associated with coactivators (NCOAs). In presence of NCOAs, the UBR5-degron is not accessible, preventing its ubiquitination and degradation. In terms of processing, palmitoylated by ZDHHC7 and ZDHHC21. Palmitoylation is required for plasma membrane targeting and for rapid intracellular signaling via ERK and AKT kinases and cAMP generation.

Its subcellular location is the nucleus. The protein localises to the cytoplasm. Its function is as follows. The steroid hormones and their receptors are involved in the regulation of eukaryotic gene expression and affect cellular proliferation and differentiation in target tissues. Transcriptional activator of several progesteron-dependent promoters in a variety of cell types. Involved in activation of SRC-dependent MAPK signaling on hormone stimulation. This is Progesterone receptor (PGR) from Hylobates lar (Lar gibbon).